Consider the following 174-residue polypeptide: Flavodoxin 1 (174 aa).

The Flavodoxin-like domain occupies 4-168; sequence IGIFYGSSSG…RLERWIAVLQ (165 aa). FMN-binding positions include 10–14 and 89–122; these read SSSGV and LFGAGDYVSHGEQFVSALGVLYDKFKARGAALVG.

It depends on FMN as a cofactor.

Flavodoxins are low-potential electron donors to a number of redox enzymes. AvFld 1 is able to donate electrons to the assimilatory nitrate reductase of A.vinelandii to catalyze the reduction of nitrate to nitrite. The protein is Flavodoxin 1 of Azotobacter vinelandii (strain DJ / ATCC BAA-1303).